The chain runs to 224 residues: 2-C-methyl-D-erythritol 4-phosphate cytidylyltransferase (224 aa).

The protein belongs to the IspD/TarI cytidylyltransferase family. IspD subfamily.

The catalysed reaction is 2-C-methyl-D-erythritol 4-phosphate + CTP + H(+) = 4-CDP-2-C-methyl-D-erythritol + diphosphate. It participates in isoprenoid biosynthesis; isopentenyl diphosphate biosynthesis via DXP pathway; isopentenyl diphosphate from 1-deoxy-D-xylulose 5-phosphate: step 2/6. Functionally, catalyzes the formation of 4-diphosphocytidyl-2-C-methyl-D-erythritol from CTP and 2-C-methyl-D-erythritol 4-phosphate (MEP). The polypeptide is 2-C-methyl-D-erythritol 4-phosphate cytidylyltransferase (Caldicellulosiruptor bescii (strain ATCC BAA-1888 / DSM 6725 / KCTC 15123 / Z-1320) (Anaerocellum thermophilum)).